A 269-amino-acid polypeptide reads, in one-letter code: Shikimate dehydrogenase (NADP(+)) (269 aa).

Residues 14 to 16 (SVS) and T61 contribute to the shikimate site. K65 acts as the Proton acceptor in catalysis. Positions 85 and 98 each coordinate shikimate. NADP(+) is bound by residues 120–124 (GAGGA), 143–148 (NRTEEK), and T211. Y213 contributes to the shikimate binding site. G234 contacts NADP(+).

It belongs to the shikimate dehydrogenase family. Homodimer.

The enzyme catalyses shikimate + NADP(+) = 3-dehydroshikimate + NADPH + H(+). Its pathway is metabolic intermediate biosynthesis; chorismate biosynthesis; chorismate from D-erythrose 4-phosphate and phosphoenolpyruvate: step 4/7. Involved in the biosynthesis of the chorismate, which leads to the biosynthesis of aromatic amino acids. Catalyzes the reversible NADPH linked reduction of 3-dehydroshikimate (DHSA) to yield shikimate (SA). The chain is Shikimate dehydrogenase (NADP(+)) from Archaeoglobus fulgidus (strain ATCC 49558 / DSM 4304 / JCM 9628 / NBRC 100126 / VC-16).